Reading from the N-terminus, the 197-residue chain is TLE family member 5 (197 aa).

Residues 166–197 (LSALGSQAHLSKEDKNGHDGDTHQEDDGEKSD) form a CCN domain region. Residues 174–197 (HLSKEDKNGHDGDTHQEDDGEKSD) are disordered. Positions 175–197 (LSKEDKNGHDGDTHQEDDGEKSD) are enriched in basic and acidic residues. The residue at position 196 (Ser196) is a Phosphoserine.

This sequence belongs to the WD repeat Groucho/TLE family. Homooligomer and heterooligomer with other family members. Binds TCF7. Binds the NF-kappa-B subunit RELA. Interacts with PHF12. Interacts (via Q domain) with SIX3. Interacts with SIX6. Post-translationally, ubiquitinated by XIAP/BIRC4. Found predominantly in muscle, heart and Placenta. In fetal tissues, abundantly expressed in the heart, lung, kidney, brain and liver.

The protein resides in the nucleus. Its function is as follows. Transcriptional corepressor. Acts as a dominant repressor towards other family members. Inhibits NF-kappa-B-regulated gene expression. May be required for the initiation and maintenance of the differentiated state. Essential for the transcriptional repressor activity of SIX3 during retina and lens development. The protein is TLE family member 5 of Homo sapiens (Human).